Consider the following 552-residue polypeptide: uncharacterized protein (552 aa).

This is an uncharacterized protein from Bacillus subtilis (strain 168).